We begin with the raw amino-acid sequence, 85 residues long: Coiled-coil-helix-coiled-coil-helix domain-containing protein 7 (85 aa).

The region spanning 13–55 (INPCLSESDASTRCLDENNYDRERCSTYFLRYKNCRRFWNSIV) is the CHCH domain. 2 short sequence motifs (cx9C motif) span residues 16–26 (CLSESDASTRC) and 37–47 (CSTYFLRYKNC). Disulfide bonds link Cys16–Cys47 and Cys26–Cys37.

Belongs to the CHCHD7 family. Monomer.

The protein resides in the mitochondrion intermembrane space. The sequence is that of Coiled-coil-helix-coiled-coil-helix domain-containing protein 7 (CHCHD7) from Homo sapiens (Human).